Consider the following 364-residue polypeptide: Chorismate synthase (364 aa).

2 residues coordinate NADP(+): Arg-48 and Arg-54. FMN-binding positions include 125–127, 238–239, Gly-278, 293–297, and Arg-319; these read RSS, NA, and KPTSS.

This sequence belongs to the chorismate synthase family. As to quaternary structure, homotetramer. Requires FMNH2 as cofactor.

The enzyme catalyses 5-O-(1-carboxyvinyl)-3-phosphoshikimate = chorismate + phosphate. It functions in the pathway metabolic intermediate biosynthesis; chorismate biosynthesis; chorismate from D-erythrose 4-phosphate and phosphoenolpyruvate: step 7/7. Its function is as follows. Catalyzes the anti-1,4-elimination of the C-3 phosphate and the C-6 proR hydrogen from 5-enolpyruvylshikimate-3-phosphate (EPSP) to yield chorismate, which is the branch point compound that serves as the starting substrate for the three terminal pathways of aromatic amino acid biosynthesis. This reaction introduces a second double bond into the aromatic ring system. The polypeptide is Chorismate synthase (Shewanella sediminis (strain HAW-EB3)).